Reading from the N-terminus, the 279-residue chain is 4-hydroxy-3-methylbut-2-enyl diphosphate reductase (279 aa).

Cys-12 provides a ligand contact to [4Fe-4S] cluster. 2 residues coordinate (2E)-4-hydroxy-3-methylbut-2-enyl diphosphate: His-41 and His-74. Residues His-41 and His-74 each contribute to the dimethylallyl diphosphate site. Residues His-41 and His-74 each contribute to the isopentenyl diphosphate site. Cys-96 contacts [4Fe-4S] cluster. His-124 contacts (2E)-4-hydroxy-3-methylbut-2-enyl diphosphate. His-124 provides a ligand contact to dimethylallyl diphosphate. Position 124 (His-124) interacts with isopentenyl diphosphate. Residue Glu-126 is the Proton donor of the active site. Position 164 (Thr-164) interacts with (2E)-4-hydroxy-3-methylbut-2-enyl diphosphate. Cys-192 is a [4Fe-4S] cluster binding site. (2E)-4-hydroxy-3-methylbut-2-enyl diphosphate is bound by residues Ser-220, Ser-221, Asn-222, and Ser-263. 4 residues coordinate dimethylallyl diphosphate: Ser-220, Ser-221, Asn-222, and Ser-263. Residues Ser-220, Ser-221, Asn-222, and Ser-263 each contribute to the isopentenyl diphosphate site.

It belongs to the IspH family. It depends on [4Fe-4S] cluster as a cofactor.

It carries out the reaction isopentenyl diphosphate + 2 oxidized [2Fe-2S]-[ferredoxin] + H2O = (2E)-4-hydroxy-3-methylbut-2-enyl diphosphate + 2 reduced [2Fe-2S]-[ferredoxin] + 2 H(+). It catalyses the reaction dimethylallyl diphosphate + 2 oxidized [2Fe-2S]-[ferredoxin] + H2O = (2E)-4-hydroxy-3-methylbut-2-enyl diphosphate + 2 reduced [2Fe-2S]-[ferredoxin] + 2 H(+). It functions in the pathway isoprenoid biosynthesis; dimethylallyl diphosphate biosynthesis; dimethylallyl diphosphate from (2E)-4-hydroxy-3-methylbutenyl diphosphate: step 1/1. It participates in isoprenoid biosynthesis; isopentenyl diphosphate biosynthesis via DXP pathway; isopentenyl diphosphate from 1-deoxy-D-xylulose 5-phosphate: step 6/6. In terms of biological role, catalyzes the conversion of 1-hydroxy-2-methyl-2-(E)-butenyl 4-diphosphate (HMBPP) into a mixture of isopentenyl diphosphate (IPP) and dimethylallyl diphosphate (DMAPP). Acts in the terminal step of the DOXP/MEP pathway for isoprenoid precursor biosynthesis. The protein is 4-hydroxy-3-methylbut-2-enyl diphosphate reductase of Clostridioides difficile (strain 630) (Peptoclostridium difficile).